Here is a 1433-residue protein sequence, read N- to C-terminus: CAP-Gly domain-containing linker protein 1 (1433 aa).

The interval 1-51 (MSMLKPSGLKAPSKTIKHGSTLLKAPASVATAPAEKAPSSEKSSSTTTADA) is disordered. Positions 32 to 49 (APAEKAPSSEKSSSTTTA) are enriched in low complexity. Residues 79-121 (GETQFAPGQWAGIVLDEPIGKNDGSVAGVRYFQCEPLRGIFTR) enclose the CAP-Gly 1 domain. The disordered stretch occupies residues 133–208 (DEANGTQTAH…VSNLSEAGSL (76 aa)). Residues 140–168 (TAHASRATSPTSTSTASAVSASPAALLPS) show a composition bias toward low complexity. Residues 184–204 (TPSQFSNLSKTASGSVSNLSE) show a composition bias toward polar residues. The 43-residue stretch at 235 to 277 (GETDFAKGEWCGVELDEPLGKNDGAVAGTRYFQCQPRYGLFAP) folds into the CAP-Gly 2 domain. Over residues 319 to 333 (SLSSVASSVSSKPSR) the composition is skewed to low complexity. The disordered stretch occupies residues 319 to 338 (SLSSVASSVSSKPSRTGLLT). Residues 351-1353 (TTALQEALKE…CEAALNGNEE (1003 aa)) are a coiled coil. A CCHC-type zinc finger spans residues 1412–1429 (PYCDTCEMFGHWTADCND).

The protein resides in the cytoplasm. It is found in the cytoskeleton. The protein localises to the cytoplasmic vesicle membrane. Its subcellular location is the cell projection. It localises to the ruffle. Functionally, binds to the plus end of microtubules and regulates the dynamics of the microtubule cytoskeleton. Promotes microtubule growth and microtubule bundling. Links cytoplasmic vesicles to microtubules and thereby plays an important role in intracellular vesicle trafficking. Plays a role macropinocytosis and endosome trafficking. This is CAP-Gly domain-containing linker protein 1 (CLIP1) from Gallus gallus (Chicken).